The chain runs to 63 residues: Large ribosomal subunit protein bL32 (63 aa).

The tract at residues 1-23 (MATPKAKVSKSRRDKRRAQFTAR) is disordered. Positions 7–18 (KVSKSRRDKRRA) are enriched in basic residues.

It belongs to the bacterial ribosomal protein bL32 family.

The chain is Large ribosomal subunit protein bL32 from Chlorobium phaeobacteroides (strain BS1).